The sequence spans 67 residues: Beta-defensin 103A (67 aa).

Residues 1 to 22 (MRIHFLLFALLFLFLMPVPGNG) form the signal peptide. 3 disulfide bridges follow: Cys-33/Cys-62, Cys-40/Cys-55, and Cys-45/Cys-63.

It belongs to the beta-defensin family.

The protein resides in the secreted. Its function is as follows. Exhibits antimicrobial activity against Gram-positive and Gram-negative bacteria. In Equus caballus (Horse), this protein is Beta-defensin 103A (DEFB103A).